Reading from the N-terminus, the 473-residue chain is Beta-secretase 1 (473 aa).

A signal peptide spans 1–21; the sequence is MAPALPWLLLWVGSGVLPVHG. Positions 22 to 45 are excised as a propeptide; that stretch reads TQDGIRLPLRSGLAGAPLGLRLPR. The Extracellular segment spans residues 22-429; it reads TQDGIRLPLR…PQTDESTLMT (408 aa). The region spanning 72–388 is the Peptidase A1 domain; it reads YYVEMTVGSP…DRARKRIGFA (317 aa). The active site involves D90. The residue at position 123 (K123) is an N6-acetyllysine. N150, N169, and N195 each carry an N-linked (GlcNAc...) asparagine glycan. Disulfide bonds link C188–C392, C250–C415, and C302–C352. N6-acetyllysine is present on residues K247, K251, and K257. D261 is an active-site residue. N6-acetyllysine is present on residues K271, K272, and K279. N-linked (GlcNAc...) asparagine glycosylation is present at N326. Residues 430-450 traverse the membrane as a helical segment; it reads IAYVMAAICALFMLPLCLMVC. Residues C446, C450, C454, and C457 are each lipidated (S-palmitoyl cysteine). Topologically, residues 451 to 473 are cytoplasmic; the sequence is QWRCLRCLRHQHDDFADDISLLK. Residues 451-473 are interaction with RTN3; it reads QWRCLRCLRHQHDDFADDISLLK. A DXXLL motif is present at residues 468-472; the sequence is DISLL. S470 bears the Phosphoserine mark. A Glycyl lysine isopeptide (Lys-Gly) (interchain with G-Cter in ubiquitin) cross-link involves residue K473.

The protein belongs to the peptidase A1 family. As to quaternary structure, monomer. Interacts (via DXXLL motif) with GGA1, GGA2 and GGA3 (via their VHS domain); the interaction highly increases when BACE1 is phosphorylated at Ser-470. Interacts with RTN1; RTN2; RTN3 and RTN4; the interaction leads to inhibition of amyloid precursor protein processing. Interacts with SNX6. Interacts with PCSK9. Interacts with NAT8 and NAT8B. Interacts with BIN1. Interacts (via extracellular domain) with ADAM10 (via extracellular domain). Interacts with SORL1; this interaction may affect binding with APP and hence reduce APP cleavage. Interacts with NRDC AND NRG1. Palmitoylation mediates lipid raft localization. Post-translationally, acetylated in the endoplasmic reticulum at Lys-123, Lys-247, Lys-251, Lys-257, Lys-271, Lys-272, and Lys-279. Acetylation by NAT8 and NAT8B is transient and deacetylation probably occurs in the Golgi. Acetylation regulates the maturation, the transport to the plasma membrane, the stability and the expression of the protein. In terms of processing, ubiquitinated at Lys-473, ubiquitination leads to lysosomal degradation. Monoubiquitinated and 'Lys-63'-linked polyubitinated. Deubiquitnated by USP8; inhibits lysosomal degradation. Phosphorylation at Ser-470 is required for interaction with GGA1 and retrograded transport from endosomal compartments to the trans-Golgi network. Non-phosphorylated BACE1 enters a direct recycling route to the cell surface. Post-translationally, N-Glycosylated. Addition of a bisecting N-acetylglucosamine by MGAT3 blocks lysosomal targeting, further degradation and is required for maintaining stability under stress conditions.

It is found in the cell membrane. The protein localises to the golgi apparatus. It localises to the trans-Golgi network. Its subcellular location is the endoplasmic reticulum. The protein resides in the endosome. It is found in the cell surface. The protein localises to the cytoplasmic vesicle membrane. It localises to the membrane raft. Its subcellular location is the lysosome. The protein resides in the late endosome. It is found in the early endosome. The protein localises to the recycling endosome. It localises to the cell projection. Its subcellular location is the axon. The protein resides in the dendrite. The enzyme catalyses Broad endopeptidase specificity. Cleaves Glu-Val-Asn-Leu-|-Asp-Ala-Glu-Phe in the Swedish variant of Alzheimer's amyloid precursor protein.. Inhibited by RTN3 and RTN4. Its function is as follows. Responsible for the proteolytic processing of the amyloid precursor protein (APP). Cleaves at the N-terminus of the A-beta peptide sequence, between residues 671 and 672 of APP, leads to the generation and extracellular release of beta-cleaved soluble APP, and a corresponding cell-associated C-terminal fragment which is later released by gamma-secretase. Cleaves CHL1. The protein is Beta-secretase 1 (BACE1) of Cavia porcellus (Guinea pig).